Here is an 80-residue protein sequence, read N- to C-terminus: UPF0346 protein LSEI_1394 (80 aa).

It belongs to the UPF0346 family.

This chain is UPF0346 protein LSEI_1394, found in Lacticaseibacillus paracasei (strain ATCC 334 / BCRC 17002 / CCUG 31169 / CIP 107868 / KCTC 3260 / NRRL B-441) (Lactobacillus paracasei).